The primary structure comprises 471 residues: Glutamate--tRNA ligase (471 aa).

Positions 10 to 20 (PSPTGYLHIGG) match the 'HIGH' region motif. The Zn(2+) site is built by Cys-107, Cys-109, Cys-134, and Glu-136. The 'KMSKS' region motif lies at 244–248 (RLSKR). Lys-247 is a binding site for ATP.

This sequence belongs to the class-I aminoacyl-tRNA synthetase family. Glutamate--tRNA ligase type 1 subfamily. Monomer. The cofactor is Zn(2+).

Its subcellular location is the cytoplasm. It catalyses the reaction tRNA(Glu) + L-glutamate + ATP = L-glutamyl-tRNA(Glu) + AMP + diphosphate. Its function is as follows. Catalyzes the attachment of glutamate to tRNA(Glu) in a two-step reaction: glutamate is first activated by ATP to form Glu-AMP and then transferred to the acceptor end of tRNA(Glu). The polypeptide is Glutamate--tRNA ligase (Anaeromyxobacter sp. (strain Fw109-5)).